A 209-amino-acid chain; its full sequence is MRTIDKRIAPNVRLAATLVARAPALTLAYDARCKSRLAATLDTGEDVALVLPRGTVLRDGDVLVADDGALVRVAAAHEAVLLVRAPDALTLTRAAYHLGNRHTPVEVGAGCLKLEYDPALADMLTRLGATVERASAPFQPEAGAYGGGHRHGHDATFAEDYALAQQVFDEHHGHSHSHSHDHDHDHDHDHDHDHQHGPSCSHGHHHGHR.

The span at 170-196 (EHHGHSHSHSHDHDHDHDHDHDHDHQH) shows a compositional bias: basic and acidic residues. The interval 170–209 (EHHGHSHSHSHDHDHDHDHDHDHDHQHGPSCSHGHHHGHR) is disordered.

This sequence belongs to the UreE family.

Its subcellular location is the cytoplasm. Functionally, involved in urease metallocenter assembly. Binds nickel. Probably functions as a nickel donor during metallocenter assembly. The chain is Urease accessory protein UreE from Burkholderia mallei (strain NCTC 10247).